A 278-amino-acid chain; its full sequence is Large ribosomal subunit protein uL2 (278 aa).

2 disordered regions span residues 29–55 and 225–278; these read PEKS…RHQG and VMNP…NKKR. Positions 258–278 are enriched in basic residues; it reads RSNKKASNKYIVRRRTKNKKR.

It belongs to the universal ribosomal protein uL2 family. In terms of assembly, part of the 50S ribosomal subunit. Forms a bridge to the 30S subunit in the 70S ribosome. Post-translationally, the N-terminus is blocked. In terms of processing, phosphorylated on serine and threonine residues.

In terms of biological role, one of the primary rRNA binding proteins. Required for association of the 30S and 50S subunits to form the 70S ribosome, for tRNA binding and peptide bond formation. It has been suggested to have peptidyltransferase activity; this is somewhat controversial. Makes several contacts with the 16S rRNA in the 70S ribosome. The polypeptide is Large ribosomal subunit protein uL2 (Streptomyces collinus).